Here is an 839-residue protein sequence, read N- to C-terminus: Protein translocase subunit SecA (839 aa).

ATP is bound by residues Gln85, 103–107 (GEGKT), and Asp493. Residues 780–790 (QIHEQERERAS) are compositionally biased toward basic and acidic residues. Positions 780–839 (QIHEQERERASQRATTAAPQNIQSQQSANTDDLPKVERNEACPCGSGKKFKNCHGRKSFS) are disordered. Residues 791-809 (QRATTAAPQNIQSQQSANT) are compositionally biased toward polar residues. Residues Cys821, Cys823, Cys832, and His833 each coordinate Zn(2+). A compositionally biased stretch (basic residues) spans 827 to 839 (KKFKNCHGRKSFS).

The protein belongs to the SecA family. In terms of assembly, monomer and homodimer. Part of the essential Sec protein translocation apparatus which comprises SecA, SecYEG and auxiliary proteins SecDF. Other proteins may also be involved. Zn(2+) serves as cofactor.

The protein resides in the cell membrane. The protein localises to the cytoplasm. It carries out the reaction ATP + H2O + cellular proteinSide 1 = ADP + phosphate + cellular proteinSide 2.. Its function is as follows. Part of the Sec protein translocase complex. Interacts with the SecYEG preprotein conducting channel. Has a central role in coupling the hydrolysis of ATP to the transfer of proteins into and across the cell membrane, serving as an ATP-driven molecular motor driving the stepwise translocation of polypeptide chains across the membrane. This is Protein translocase subunit SecA from Streptococcus pyogenes serotype M28 (strain MGAS6180).